A 160-amino-acid chain; its full sequence is Large ribosomal subunit protein eL29 (160 aa).

Residues 1–26 show a composition bias toward basic residues; it reads MAKSKNHTTHNQSRKWHRNGIKKPRS. The interval 1–32 is disordered; the sequence is MAKSKNHTTHNQSRKWHRNGIKKPRSQRYESL. Lysine 5 is subject to N6-methyllysine. Serine 31 bears the Phosphoserine mark. Lysine 33 is modified (N6-acetyllysine). A disordered region spans residues 119–160; that stretch reads CRPKSQAKAQSKAKATAGGTAAAPVPPASAPKGAQAPTKAPQ. Residues 121–141 are compositionally biased toward low complexity; the sequence is PKSQAKAQSKAKATAGGTAAA.

Belongs to the eukaryotic ribosomal protein eL29 family. Component of the large ribosomal subunit.

The protein resides in the cytoplasm. In terms of biological role, component of the large ribosomal subunit. The ribosome is a large ribonucleoprotein complex responsible for the synthesis of proteins in the cell. This chain is Large ribosomal subunit protein eL29 (RPL29), found in Sus scrofa (Pig).